Reading from the N-terminus, the 188-residue chain is Translation machinery-associated protein 22 (188 aa).

The SUI1 domain maps to 96 to 167; it reads VVIKRIERSK…GVEELITQML (72 aa).

This sequence belongs to the DENR family. Interacts with the 40S ribosomal subunit.

It is found in the cytoplasm. The chain is Translation machinery-associated protein 22 (TMA22) from Yarrowia lipolytica (strain CLIB 122 / E 150) (Yeast).